A 252-amino-acid chain; its full sequence is Transmembrane ascorbate-dependent reductase CYB561 (252 aa).

The residue at position 1 (Met1) is an N-acetylmethionine. Residues Met1–Tyr17 are Cytoplasmic-facing. Residues Val18–Met38 form a helical membrane-spanning segment. Positions Phe20–Thr221 constitute a Cytochrome b561 domain. Residues Tyr39–Asn52 lie on the Vesicular side of the membrane. The chain crosses the membrane as a helical span at residues Val53–Tyr73. The heme b site is built by His54, Arg74, and Lys81. At Arg74 to Val86 the chain is on the cytoplasmic side. Residues Lys81 and Lys85 each coordinate L-ascorbate. A helical transmembrane segment spans residues Leu87–Phe107. Heme b-binding positions include His88, Asp117–Ser120, and His122. Residues Glu108 to Cys125 are Vesicular-facing. A helical transmembrane segment spans residues Gly126 to Phe146. The Cytoplasmic portion of the chain corresponds to Pro147–Pro159. Arg154 is an L-ascorbate binding site. A helical membrane pass occupies residues Gln160–Leu180. Residues His161 and Glu182 each coordinate heme b. At Lys181–Gly199 the chain is on the vesicular side. The helical transmembrane segment at Val200 to Leu220 threads the bilayer. The Cytoplasmic segment spans residues Thr221–Gln252. Residue Lys226 coordinates heme b. 2 positions are modified to phosphoserine: Ser248 and Ser250.

Requires heme b as cofactor.

It is found in the cytoplasmic vesicle. It localises to the secretory vesicle. The protein localises to the chromaffin granule membrane. It catalyses the reaction monodehydro-L-ascorbate radical(out) + L-ascorbate(in) = monodehydro-L-ascorbate radical(in) + L-ascorbate(out). Its function is as follows. Transmembrane reductase that uses ascorbate as an electron donor in the cytoplasm and transfers electrons across membranes to reduce monodehydro-L-ascorbate radical in the lumen of secretory vesicles. It is therefore involved the regeneration and homeostasis within secretory vesicles of ascorbate which in turn provides reducing equivalents needed to support the activity of intravesicular enzymes. This is Transmembrane ascorbate-dependent reductase CYB561 (CYB561) from Ovis aries (Sheep).